Reading from the N-terminus, the 786-residue chain is Digalactosyldiacylglycerol synthase 1, chloroplastic (786 aa).

Residues Met1 to Arg25 constitute a chloroplast transit peptide.

This sequence belongs to the glycosyltransferase group 1 family. Glycosyltransferase 4 subfamily. As to expression, high expression in nodules infected cells, but low in nodule inner cortex and root central cylinder.

It is found in the plastid. Its subcellular location is the chloroplast outer membrane. It localises to the plastid outer membrane. The enzyme catalyses a 1,2-diacyl-3-O-(beta-D-galactosyl)-sn-glycerol + UDP-alpha-D-galactose = a 1,2-diacyl-3-O-[alpha-D-galactosyl-(1-&gt;6)-beta-D-galactosyl]-sn-glycerol + UDP + H(+). Its function is as follows. Involved in the synthesis of diacylglycerol galactolipids that are specifically found in thylakoid and in nodule peribacteroid membranes. Specific for alpha-glycosidic linkages. This is Digalactosyldiacylglycerol synthase 1, chloroplastic from Lotus japonicus (Lotus corniculatus var. japonicus).